A 308-amino-acid chain; its full sequence is Cell division protein ZipA (308 aa).

Topologically, residues 1-5 (MQELR) are periplasmic. Residues 6-26 (LVLILVGALAIAALLFHGLWT) form a helical membrane-spanning segment. Residues 27–308 (SRKETSSKFG…YKQRVKVFCN (282 aa)) are Cytoplasmic-facing. The segment at 43 to 90 (FDSESEDEQPTPARGFEQPKESVVDVRQERKEPAFGRDEPNLSQDPLF) is disordered. A compositionally biased stretch (basic and acidic residues) spans 59-82 (EQPKESVVDVRQERKEPAFGRDEP).

This sequence belongs to the ZipA family. As to quaternary structure, interacts with FtsZ via their C-terminal domains.

The protein localises to the cell inner membrane. In terms of biological role, essential cell division protein that stabilizes the FtsZ protofilaments by cross-linking them and that serves as a cytoplasmic membrane anchor for the Z ring. Also required for the recruitment to the septal ring of downstream cell division proteins. The sequence is that of Cell division protein ZipA from Aliivibrio salmonicida (strain LFI1238) (Vibrio salmonicida (strain LFI1238)).